A 329-amino-acid chain; its full sequence is Holliday junction branch migration complex subunit RuvB (329 aa).

Residues 1–180 (MKNILQSTEC…FGIPIHLEFY (180 aa)) are large ATPase domain (RuvB-L). ATP is bound by residues Ile-19, Arg-20, Gly-61, Lys-64, Thr-65, Thr-66, 127-129 (EDF), Arg-170, Tyr-180, and Arg-217. Thr-65 is a Mg(2+) binding site. A small ATPAse domain (RuvB-S) region spans residues 181–252 (STEELIKVIQ…FADKALLRLG (72 aa)). The segment at 255-329 (KLGLDRQDIQ…ISYLKEQSYI (75 aa)) is head domain (RuvB-H). Residues Arg-308 and Arg-313 each coordinate DNA.

It belongs to the RuvB family. In terms of assembly, homohexamer. Forms an RuvA(8)-RuvB(12)-Holliday junction (HJ) complex. HJ DNA is sandwiched between 2 RuvA tetramers; dsDNA enters through RuvA and exits via RuvB. An RuvB hexamer assembles on each DNA strand where it exits the tetramer. Each RuvB hexamer is contacted by two RuvA subunits (via domain III) on 2 adjacent RuvB subunits; this complex drives branch migration. In the full resolvosome a probable DNA-RuvA(4)-RuvB(12)-RuvC(2) complex forms which resolves the HJ.

It localises to the cytoplasm. The enzyme catalyses ATP + H2O = ADP + phosphate + H(+). The RuvA-RuvB-RuvC complex processes Holliday junction (HJ) DNA during genetic recombination and DNA repair, while the RuvA-RuvB complex plays an important role in the rescue of blocked DNA replication forks via replication fork reversal (RFR). RuvA specifically binds to HJ cruciform DNA, conferring on it an open structure. The RuvB hexamer acts as an ATP-dependent pump, pulling dsDNA into and through the RuvAB complex. RuvB forms 2 homohexamers on either side of HJ DNA bound by 1 or 2 RuvA tetramers; 4 subunits per hexamer contact DNA at a time. Coordinated motions by a converter formed by DNA-disengaged RuvB subunits stimulates ATP hydrolysis and nucleotide exchange. Immobilization of the converter enables RuvB to convert the ATP-contained energy into a lever motion, pulling 2 nucleotides of DNA out of the RuvA tetramer per ATP hydrolyzed, thus driving DNA branch migration. The RuvB motors rotate together with the DNA substrate, which together with the progressing nucleotide cycle form the mechanistic basis for DNA recombination by continuous HJ branch migration. Branch migration allows RuvC to scan DNA until it finds its consensus sequence, where it cleaves and resolves cruciform DNA. In Ehrlichia canis (strain Jake), this protein is Holliday junction branch migration complex subunit RuvB.